The primary structure comprises 322 residues: Phosphatidylserine decarboxylase proenzyme (322 aa).

Catalysis depends on charge relay system; for autoendoproteolytic cleavage activity residues Asp-90, His-147, and Ser-254. Ser-254 (schiff-base intermediate with substrate; via pyruvic acid; for decarboxylase activity) is an active-site residue. Ser-254 bears the Pyruvic acid (Ser); by autocatalysis mark. Residues 290–322 are disordered; the sequence is FVTPDSEPAPLPAEEIEAEHDASPLVDDKKDQV. The segment covering 308–322 has biased composition (basic and acidic residues); the sequence is EHDASPLVDDKKDQV.

It belongs to the phosphatidylserine decarboxylase family. PSD-B subfamily. Prokaryotic type I sub-subfamily. As to quaternary structure, heterodimer of a large membrane-associated beta subunit and a small pyruvoyl-containing alpha subunit. Requires pyruvate as cofactor. Is synthesized initially as an inactive proenzyme. Formation of the active enzyme involves a self-maturation process in which the active site pyruvoyl group is generated from an internal serine residue via an autocatalytic post-translational modification. Two non-identical subunits are generated from the proenzyme in this reaction, and the pyruvate is formed at the N-terminus of the alpha chain, which is derived from the carboxyl end of the proenzyme. The autoendoproteolytic cleavage occurs by a canonical serine protease mechanism, in which the side chain hydroxyl group of the serine supplies its oxygen atom to form the C-terminus of the beta chain, while the remainder of the serine residue undergoes an oxidative deamination to produce ammonia and the pyruvoyl prosthetic group on the alpha chain. During this reaction, the Ser that is part of the protease active site of the proenzyme becomes the pyruvoyl prosthetic group, which constitutes an essential element of the active site of the mature decarboxylase.

The protein resides in the cell membrane. The enzyme catalyses a 1,2-diacyl-sn-glycero-3-phospho-L-serine + H(+) = a 1,2-diacyl-sn-glycero-3-phosphoethanolamine + CO2. It participates in phospholipid metabolism; phosphatidylethanolamine biosynthesis; phosphatidylethanolamine from CDP-diacylglycerol: step 2/2. In terms of biological role, catalyzes the formation of phosphatidylethanolamine (PtdEtn) from phosphatidylserine (PtdSer). This is Phosphatidylserine decarboxylase proenzyme from Escherichia fergusonii (strain ATCC 35469 / DSM 13698 / CCUG 18766 / IAM 14443 / JCM 21226 / LMG 7866 / NBRC 102419 / NCTC 12128 / CDC 0568-73).